Reading from the N-terminus, the 310-residue chain is Isoflavone reductase homolog P3 (310 aa).

NADP(+) contacts are provided by residues 12-18 (GGTGYIG), arginine 37, and lysine 46. Lysine 134 acts as the Proton acceptor in catalysis. Arginine 138 lines the NADP(+) pocket.

The protein belongs to the NmrA-type oxidoreductase family. Isoflavone reductase subfamily.

It is found in the cytoplasm. This Arabidopsis thaliana (Mouse-ear cress) protein is Isoflavone reductase homolog P3.